Reading from the N-terminus, the 421-residue chain is Histidine--tRNA ligase (421 aa).

Belongs to the class-II aminoacyl-tRNA synthetase family. Homodimer.

The protein localises to the cytoplasm. The enzyme catalyses tRNA(His) + L-histidine + ATP = L-histidyl-tRNA(His) + AMP + diphosphate + H(+). The sequence is that of Histidine--tRNA ligase from Caldicellulosiruptor bescii (strain ATCC BAA-1888 / DSM 6725 / KCTC 15123 / Z-1320) (Anaerocellum thermophilum).